Consider the following 503-residue polypeptide: Maturase K (503 aa).

It belongs to the intron maturase 2 family. MatK subfamily.

The protein resides in the plastid. It localises to the chloroplast. Its function is as follows. Usually encoded in the trnK tRNA gene intron. Probably assists in splicing its own and other chloroplast group II introns. The chain is Maturase K from Aethionema cordifolium (Lebanon stonecress).